The chain runs to 876 residues: Phosphoenolpyruvate carboxylase (876 aa).

Residues H138 and K543 contribute to the active site.

Belongs to the PEPCase type 1 family. Mg(2+) serves as cofactor.

It carries out the reaction oxaloacetate + phosphate = phosphoenolpyruvate + hydrogencarbonate. Forms oxaloacetate, a four-carbon dicarboxylic acid source for the tricarboxylic acid cycle. The polypeptide is Phosphoenolpyruvate carboxylase (Aliivibrio salmonicida (strain LFI1238) (Vibrio salmonicida (strain LFI1238))).